Reading from the N-terminus, the 236-residue chain is Phosphoserine phosphatase (236 aa).

Aspartate 30 serves as the catalytic Nucleophile. Residues aspartate 30 and aspartate 32 each coordinate Mg(2+). The active-site Proton donor is aspartate 32. Residues glutamate 39, arginine 76, 120 to 121, and lysine 169 contribute to the substrate site; that span reads SG. Aspartate 192 contributes to the Mg(2+) binding site. Residue asparagine 195 participates in substrate binding.

Belongs to the HAD-like hydrolase superfamily. SerB family. Mg(2+) serves as cofactor.

It carries out the reaction O-phospho-L-serine + H2O = L-serine + phosphate. The enzyme catalyses O-phospho-D-serine + H2O = D-serine + phosphate. It participates in amino-acid biosynthesis; L-serine biosynthesis; L-serine from 3-phospho-D-glycerate: step 3/3. The sequence is that of Phosphoserine phosphatase from Polaromonas sp. (strain JS666 / ATCC BAA-500).